We begin with the raw amino-acid sequence, 409 residues long: TM2 domain-containing protein ZK858.5 (409 aa).

A TM2 domain is found at 8 to 55; it reads VKPWIVRIILIVGGLFGAHRLYLKQVPEAFVFFSTLGVLLIGWLYDSF. The next 6 helical transmembrane spans lie at 10 to 30, 37 to 57, 104 to 124, 127 to 147, 168 to 190, and 209 to 229; these read PWIV…RLYL, FVFF…SFMF, VLYG…TFGW, INLI…IYII, MFIM…AIVS, and HFLF…LGCS.

It belongs to the TM2 family.

It is found in the membrane. This chain is TM2 domain-containing protein ZK858.5, found in Caenorhabditis elegans.